Reading from the N-terminus, the 343-residue chain is Mating-type protein MAT-2 (343 aa).

Disordered regions lie at residues 98 to 117 (RSPQ…SEQT) and 177 to 223 (KKPW…AAMT). Residues 99-117 (SPQVVSSPQSAQTSPSEQT) are compositionally biased toward low complexity. Positions 131–199 (APRPMNCWII…EHLRQHPNYK (69 aa)) form a DNA-binding region, HMG box. Basic residues predominate over residues 206-218 (GEKKKRQSRKSKR).

Its subcellular location is the nucleus. The protein is Mating-type protein MAT-2 (MAT2) of Cochliobolus heterostrophus (Southern corn leaf blight fungus).